Reading from the N-terminus, the 82-residue chain is Small ribosomal subunit protein uS17c (82 aa).

This sequence belongs to the universal ribosomal protein uS17 family. In terms of assembly, part of the 30S ribosomal subunit.

The protein localises to the plastid. The protein resides in the chloroplast. Its function is as follows. One of the primary rRNA binding proteins, it binds specifically to the 5'-end of 16S ribosomal RNA. This chain is Small ribosomal subunit protein uS17c (rps17), found in Emiliania huxleyi (Coccolithophore).